A 154-amino-acid chain; its full sequence is Transcription antitermination protein NusB (154 aa).

The disordered stretch occupies residues 132–154 (KDKQSPQSTPLDDSDKDESDQTN). Over residues 143–154 (DDSDKDESDQTN) the composition is skewed to acidic residues.

It belongs to the NusB family.

Involved in transcription antitermination. Required for transcription of ribosomal RNA (rRNA) genes. Binds specifically to the boxA antiterminator sequence of the ribosomal RNA (rrn) operons. This Bifidobacterium animalis subsp. lactis (strain AD011) protein is Transcription antitermination protein NusB.